A 138-amino-acid chain; its full sequence is Small ribosomal subunit protein uS11c (138 aa).

This sequence belongs to the universal ribosomal protein uS11 family. Part of the 30S ribosomal subunit.

It localises to the plastid. It is found in the chloroplast. The polypeptide is Small ribosomal subunit protein uS11c (Nandina domestica (Heavenly bamboo)).